The primary structure comprises 426 residues: Glutamyl-tRNA reductase (426 aa).

Substrate contacts are provided by residues 50-53, serine 108, 113-115, and glutamine 119; these read TCNR and EPQ. The active-site Nucleophile is the cysteine 51. NADP(+) is bound at residue 188 to 193; that stretch reads GAGEMI.

Belongs to the glutamyl-tRNA reductase family. Homodimer.

The catalysed reaction is (S)-4-amino-5-oxopentanoate + tRNA(Glu) + NADP(+) = L-glutamyl-tRNA(Glu) + NADPH + H(+). It functions in the pathway porphyrin-containing compound metabolism; protoporphyrin-IX biosynthesis; 5-aminolevulinate from L-glutamyl-tRNA(Glu): step 1/2. Its function is as follows. Catalyzes the NADPH-dependent reduction of glutamyl-tRNA(Glu) to glutamate 1-semialdehyde (GSA). The chain is Glutamyl-tRNA reductase from Polaromonas sp. (strain JS666 / ATCC BAA-500).